The sequence spans 123 residues: Large ribosomal subunit protein uL29x (123 aa).

This sequence belongs to the universal ribosomal protein uL29 family.

This Arabidopsis thaliana (Mouse-ear cress) protein is Large ribosomal subunit protein uL29x (RPL35C).